Here is a 930-residue protein sequence, read N- to C-terminus: G patch domain-containing protein TGH (930 aa).

Lys-25 is covalently cross-linked (Glycyl lysine isopeptide (Lys-Gly) (interchain with G-Cter in ubiquitin)). The interval 76–152 is disordered; it reads GWAPQSFTSS…PSAIPGPVPD (77 aa). One can recognise a G-patch domain in the interval 159–199; it reads SESIGVKLLLKMGWRRGHSIKEVRASSDARREARKAFLAFY. The stretch at 405–447 is one SURP motif repeat; the sequence is LIEGFATFVSRCGKLYEDLSREKNQSNQLFDFLREGNGHDYYA. 3 disordered regions span residues 478–508, 687–751, and 773–930; these read AETRGSLLGEKPLQRSLKETDTSASSGGSFQ, RQVS…NEAA, and FEVP…RRRD. Basic and acidic residues predominate over residues 489-498; sequence PLQRSLKETD. Residues 499 to 508 are compositionally biased toward polar residues; it reads TSASSGGSFQ. Over residues 701–711 the composition is skewed to acidic residues; sequence IEEPEVEVEVE. A compositionally biased stretch (basic and acidic residues) spans 779-808; that stretch reads EEIKSRSKPEDSSDKRLDRPGLKEKVEEKT. The span at 848–857 shows a compositional bias: basic residues; sequence RRKRYNKKDR. The segment covering 858 to 877 has biased composition (basic and acidic residues); it reads HRNDSESDSSSDYHSRDKQG. Basic residues predominate over residues 892–908; sequence RSSHKKHSKHRRTKKSS. Over residues 913–923 the composition is skewed to basic and acidic residues; it reads SSDEEQKESRR.

Expressed in vasculature of cotyledons and leaves, young meristematic tissues, trichomes and pistils.

It localises to the nucleus speckle. The protein localises to the nucleus. It is found in the nucleoplasm. In terms of biological role, functions as a component of microRNA (miRNA) and small interfering RNA (siRNA) biogenesis. May assist DCL1 and DCL4 to efficiently process and/or recruit the precursors of miRNAs and siRNAs. In the miRNA biogenesis pathway, associates with the DCL1 complex that processes primary miRNAs (pri-miRNAs) into miRNAs. Binds pri-miRNAs and precursor miRNAs (pre-miRNAs). Is required for the interaction between pri-miRNAs and DRB1. Required for general proper plant growth and, in particular, initiation of vascular development. Interacts genetically with AMP1, a glutamate carboxypeptidase involved in the regulation of meristem function. The polypeptide is G patch domain-containing protein TGH (Arabidopsis thaliana (Mouse-ear cress)).